The sequence spans 270 residues: Phosphonates import ATP-binding protein PhnC (270 aa).

The region spanning 2-245 (LVIEGLTCRF…IARELYDLEA (244 aa)) is the ABC transporter domain. Position 34-41 (34-41 (GRSGAGKS)) interacts with ATP.

It belongs to the ABC transporter superfamily. Phosphonates importer (TC 3.A.1.9.1) family. In terms of assembly, the complex is composed of two ATP-binding proteins (PhnC), two transmembrane proteins (PhnE) and a solute-binding protein (PhnD).

Its subcellular location is the cell inner membrane. It catalyses the reaction phosphonate(out) + ATP + H2O = phosphonate(in) + ADP + phosphate + H(+). Its function is as follows. Part of the ABC transporter complex PhnCDE involved in phosphonates import. Responsible for energy coupling to the transport system. This is Phosphonates import ATP-binding protein PhnC from Rhodopseudomonas palustris (strain BisB5).